The chain runs to 53 residues: Metallocarboxypeptidase inhibitor b (53 aa).

Disulfide bonds link Cys-9–Cys-23, Cys-15–Cys-51, and Cys-27–Cys-38. Ala-53 serves as a coordination point for Zn(2+).

In terms of biological role, metallocarboxypeptidase inhibitor. Has an inhibitory effect on bovine CPA1 and porcine CPB1. Does not inhibit D.melanogaster svr (carboxypeptidase D). Shows no activity against serine proteases subtilisin or bovine trypsin, cysteine protease papain, and aspartyl protease porcine pepsin. In Nerita versicolor (Four-tooth nerite), this protein is Metallocarboxypeptidase inhibitor b.